A 505-amino-acid polypeptide reads, in one-letter code: ATP synthase subunit alpha, chloroplastic (505 aa).

170–177 (GDRQTGKT) provides a ligand contact to ATP.

The protein belongs to the ATPase alpha/beta chains family. As to quaternary structure, F-type ATPases have 2 components, CF(1) - the catalytic core - and CF(0) - the membrane proton channel. CF(1) has five subunits: alpha(3), beta(3), gamma(1), delta(1), epsilon(1). CF(0) has four main subunits: a, b, b' and c.

Its subcellular location is the plastid. The protein resides in the chloroplast thylakoid membrane. The catalysed reaction is ATP + H2O + 4 H(+)(in) = ADP + phosphate + 5 H(+)(out). In terms of biological role, produces ATP from ADP in the presence of a proton gradient across the membrane. The alpha chain is a regulatory subunit. This Phaeodactylum tricornutum (strain CCAP 1055/1) protein is ATP synthase subunit alpha, chloroplastic.